A 582-amino-acid polypeptide reads, in one-letter code: UPF0329 protein ECU07_0070 (582 aa).

The interval 326 to 386 (EEKAKSKKKG…KTGKKSKGDQ (61 aa)) is disordered. Residues 330–339 (KSKKKGKKKS) are compositionally biased toward basic residues. Residues 344 to 354 (EAKEEEKKESG) show a composition bias toward basic and acidic residues.

This sequence belongs to the UPF0329 family.

This chain is UPF0329 protein ECU07_0070, found in Encephalitozoon cuniculi (strain GB-M1) (Microsporidian parasite).